A 225-amino-acid polypeptide reads, in one-letter code: Cytochrome c oxidase subunit 2 (225 aa).

The Mitochondrial intermembrane portion of the chain corresponds to 1 to 25 (MSTWMMFMFQESNSLYADNLVSFHN). Residues 26–47 (MVMIIVIMISTLTVYIIFDLFL) traverse the membrane as a helical segment. At 48–62 (NKFSNLYLLKNHNIE) the chain is on the mitochondrial matrix side. The helical transmembrane segment at 63 to 82 (IIWMIVPIVILLIICFPSLK) threads the bilayer. The Mitochondrial intermembrane portion of the chain corresponds to 83–225 (ILYLIDEIVN…YFMNWIYKMN (143 aa)). 6 residues coordinate Cu cation: histidine 159, cysteine 194, glutamate 196, cysteine 198, histidine 202, and methionine 205. Glutamate 196 lines the Mg(2+) pocket.

This sequence belongs to the cytochrome c oxidase subunit 2 family. In terms of assembly, component of the cytochrome c oxidase (complex IV, CIV), a multisubunit enzyme composed of a catalytic core of 3 subunits and several supernumerary subunits. The complex exists as a monomer or a dimer and forms supercomplexes (SCs) in the inner mitochondrial membrane with ubiquinol-cytochrome c oxidoreductase (cytochrome b-c1 complex, complex III, CIII). It depends on Cu cation as a cofactor.

It localises to the mitochondrion inner membrane. It carries out the reaction 4 Fe(II)-[cytochrome c] + O2 + 8 H(+)(in) = 4 Fe(III)-[cytochrome c] + 2 H2O + 4 H(+)(out). Functionally, component of the cytochrome c oxidase, the last enzyme in the mitochondrial electron transport chain which drives oxidative phosphorylation. The respiratory chain contains 3 multisubunit complexes succinate dehydrogenase (complex II, CII), ubiquinol-cytochrome c oxidoreductase (cytochrome b-c1 complex, complex III, CIII) and cytochrome c oxidase (complex IV, CIV), that cooperate to transfer electrons derived from NADH and succinate to molecular oxygen, creating an electrochemical gradient over the inner membrane that drives transmembrane transport and the ATP synthase. Cytochrome c oxidase is the component of the respiratory chain that catalyzes the reduction of oxygen to water. Electrons originating from reduced cytochrome c in the intermembrane space (IMS) are transferred via the dinuclear copper A center (CU(A)) of subunit 2 and heme A of subunit 1 to the active site in subunit 1, a binuclear center (BNC) formed by heme A3 and copper B (CU(B)). The BNC reduces molecular oxygen to 2 water molecules using 4 electrons from cytochrome c in the IMS and 4 protons from the mitochondrial matrix. In Apis florea (Dwarf honeybee), this protein is Cytochrome c oxidase subunit 2 (COII).